The following is a 485-amino-acid chain: Serine/threonine-protein kinase 4 (485 aa).

A Protein kinase domain is found at 30-281 (FDVLEKLGEG…ATELLQHPFI (252 aa)). ATP-binding positions include 36-44 (LGEGSYGSV) and lysine 59. The active-site Proton acceptor is aspartate 149. Threonine 183 carries the post-translational modification Phosphothreonine; by autocatalysis. The SARAH domain maps to 431–478 (YSFLKDWSVAEVQLKLNSLDPMMEREIEEIHHKYQAKRQPILEAIESK).

Belongs to the protein kinase superfamily. STE Ser/Thr protein kinase family. STE20 subfamily. In terms of assembly, homodimer; mediated via the coiled-coil region. Mg(2+) is required as a cofactor. Post-translationally, autophosphorylated on Thr-183. Proteolytically cleaved by caspase-3 during apoptosis at Asp-326 resulting in a 37 kDa form. Proteolytic cleavage results in kinase activation and nuclear translocation of the truncated form (MST1/N).

It is found in the cytoplasm. It localises to the nucleus. It catalyses the reaction L-seryl-[protein] + ATP = O-phospho-L-seryl-[protein] + ADP + H(+). It carries out the reaction L-threonyl-[protein] + ATP = O-phospho-L-threonyl-[protein] + ADP + H(+). Its activity is regulated as follows. The C-terminal non-catalytic region inhibits the kinase activity, the enzyme is activated by caspase-cleavage. Homodimerization and autophosphorylation of Thr-183 is also required for full activation. In terms of biological role, stress-activated, pro-apoptotic kinase which, following caspase-cleavage, enters the nucleus and induces chromatin condensation followed by internucleosomal DNA fragmentation. Key component of the Hippo signaling pathway which plays a pivotal role in organ size control and tumor suppression by restricting proliferation and promoting apoptosis. The core of this pathway is composed of a kinase cascade wherein stk3/mst2 and stk4/mst1, in complex with its regulatory protein sav1, phosphorylates and activates lats1/2 in complex with its regulatory protein mob1, which in turn phosphorylates and inactivates yap1 oncoprotein and wwtr1/taz. Phosphorylation of yap1 by lats2 inhibits its translocation into the nucleus to regulate cellular genes important for cell proliferation, cell death, and cell migration. Phosphorylates 'Ser-14' of histone H2B (H2BS14ph) during apoptosis. This is Serine/threonine-protein kinase 4 (stk4) from Xenopus laevis (African clawed frog).